Reading from the N-terminus, the 205-residue chain is Tegument protein UL51 homolog (205 aa).

Cys4 carries S-palmitoyl cysteine; by host lipidation.

It belongs to the herpesviridae UL51 family. As to quaternary structure, oligomerizes. Interacts with U75; this interaction mediates U75 incorporation to virions. Post-translationally, phosphorylated. Palmitoylation is necessary for Golgi localization.

It is found in the virion tegument. Its subcellular location is the host cytoplasm. It localises to the host Golgi apparatus. Plays several roles during the time course of infection, including egress of virus particles from the perinuclear space and secondary envelopment of cytoplasmic capsids that bud into specific trans-Golgi network (TGN)-derived membranes. This is Tegument protein UL51 homolog (U44) from Homo sapiens (Human).